Reading from the N-terminus, the 775-residue chain is MAQKPDGGAGLRGFQAEASVEDSALLVQTLMEAIQISEAPPTSQATAAASGPNASPQSSQPPTANEKADTEVSAAAARPKTGFKAQNATTKGPNDYSQARNAKEMPKNQSKAAFKSQNGTPKGPHAASDFSQAAPTGKSAKKSEMAFKGQNSTKAGPGTTYNFPQSPSANEMTNNQPKTAKAWNDTTKVPGADAQTQNVNQAKMADVGTSAGISEADGAAAQTSADGSQTQNVESRTIIRGKRTRKVNNLNVEENNSGDQRRASLASGNWRSAPVPVTTQQNPPGAPPNVVWQTPLAWQNPSGWQNQTARQTPPAARQSPPARQTPSAWQNPVAWQNPVIWPNPVIWQNPVIWPNPIVWPGPIVWPNPMAWQSTPGWQSPPSWQAPPSWQSPQDWQGPPDWQVPPDWSMPPDWSFPSDWPFPPDWIPADWPIPPDWQNLRPSPNLRSSSNSRASQNQGPPQPRDVALLQERANKLVKYLMLKDYTKVPIKRSEMLRDIIREYTDVYPEIIERACFVLEKKFGIQLKEIDKEEHLYILISTPESLAGILGTTKDTPKLGLLLVILGIIFMNGNRATEAVLWEALRKMGLRPGVRHPLLGDLRKLLTYEFVKQKYLDYRRVPNSNPPEYEFLWGLRSYHETSKMKVLRFIAEVQKRDPRDWTAQFMEAADEALDALDAAAAEAEARAEARNRMGIGDEAVSGPWSWDDIEFELLTWDEEGDFGDPWSRIPFTFWARYHQNARSRFPQAFTGPIIGPSGTATANFAANFGAIGFFWVE.

Positions 37-330 (SEAPPTSQAT…PARQTPSAWQ (294 aa)) are disordered. Residues 39-50 (APPTSQATAAAS) show a composition bias toward low complexity. Polar residues-rich tracts occupy residues 52 to 63 (PNASPQSSQPPT), 84 to 100 (KAQN…SQAR), 107 to 120 (KNQS…QNGT), 149 to 178 (GQNS…NQPK), 221 to 235 (AQTS…NVES), 247 to 258 (VNNLNVEENNSG), and 296 to 308 (LAWQ…QNQT). A run of 19 repeats spans residues 292 to 297 (WQTPLA), 298 to 303 (WQNPSG), 304 to 309 (WQNQTA), 329 to 334 (WQNPVA), 335 to 340 (WQNPVI), 341 to 346 (WPNPVI), 347 to 352 (WQNPVI), 353 to 358 (WPNPIV), 359 to 364 (WPGPIV), 365 to 370 (WPNPMA), 371 to 376 (WQSTPG), 377 to 382 (WQSPPS), 383 to 388 (WQAPPS), 389 to 394 (WQSPQD), 395 to 400 (WQGPPD), 401 to 406 (WQVPPD), 407 to 412 (WSMPPD), 413 to 418 (WSFPSD), and 419 to 424 (WPFPPD). Positions 292–441 (WQTPLAWQNP…IPPDWQNLRP (150 aa)) are 22 X 6 AA tandem repeats of W-[PQ]-X-P-X-X. Low complexity predominate over residues 309–326 (ARQTPPAARQSPPARQTP). Positions 374–409 (TPGWQSPPSWQAPPSWQSPQDWQGPPDWQVPPDWSM) are disordered. The segment covering 375–406 (PGWQSPPSWQAPPSWQSPQDWQGPPDWQVPPD) has biased composition (low complexity). A 20; approximate repeat occupies 425–429 (WIPAD). 2 repeat units span residues 430 to 435 (WPIPPD) and 436 to 441 (WQNLRP). Low complexity predominate over residues 437–452 (QNLRPSPNLRSSSNSR). The segment at 437-463 (QNLRPSPNLRSSSNSRASQNQGPPQPR) is disordered. The MAGE domain occupies 468–666 (LQERANKLVK…RDWTAQFMEA (199 aa)).

In terms of assembly, interacts with DLX5, DLX7 and MSX2 and forms homomultimers. Interacts with UNC5A. Interacts with TRIM28 and PJA1. Interacts with NGFR/p75NTR and RORA. As to expression, ubiquitously expressed in many adult tissues, except for the spleen. Expressed in osteoblastic and chondrogenic cell lines and also during embryonic development.

The protein resides in the nucleus. It localises to the cytoplasm. The protein localises to the cell membrane. Its function is as follows. Involved in the apoptotic response after nerve growth factor (NGF) binding in neuronal cells. Inhibits cell cycle progression, and facilitates NGFR-mediated apoptosis. May act as a regulator of the function of DLX family members. May enhance ubiquitin ligase activity of RING-type zinc finger-containing E3 ubiquitin-protein ligases. Proposed to act through recruitment and/or stabilization of the Ubl-conjugating enzyme (E2) at the E3:substrate complex. Plays a role in the circadian rhythm regulation. May act as RORA coregulator, modulating the expression of core clock genes such as BMAL1 and NFIL3, induced, or NR1D1, repressed. This Mus musculus (Mouse) protein is Melanoma-associated antigen D1 (Maged1).